The following is a 105-amino-acid chain: Phosphoribosyl-AMP cyclohydrolase (105 aa).

Asp72 contacts Mg(2+). Cys73 is a Zn(2+) binding site. 2 residues coordinate Mg(2+): Asp74 and Asp76. Zn(2+) is bound by residues Cys89 and Cys96.

Belongs to the PRA-CH family. Homodimer. Mg(2+) is required as a cofactor. It depends on Zn(2+) as a cofactor.

It is found in the cytoplasm. It carries out the reaction 1-(5-phospho-beta-D-ribosyl)-5'-AMP + H2O = 1-(5-phospho-beta-D-ribosyl)-5-[(5-phospho-beta-D-ribosylamino)methylideneamino]imidazole-4-carboxamide. The protein operates within amino-acid biosynthesis; L-histidine biosynthesis; L-histidine from 5-phospho-alpha-D-ribose 1-diphosphate: step 3/9. Functionally, catalyzes the hydrolysis of the adenine ring of phosphoribosyl-AMP. The chain is Phosphoribosyl-AMP cyclohydrolase from Listeria monocytogenes serotype 4b (strain CLIP80459).